The primary structure comprises 316 residues: Glycine--tRNA ligase alpha subunit (316 aa).

The protein belongs to the class-II aminoacyl-tRNA synthetase family. As to quaternary structure, tetramer of two alpha and two beta subunits.

It is found in the cytoplasm. It catalyses the reaction tRNA(Gly) + glycine + ATP = glycyl-tRNA(Gly) + AMP + diphosphate. The polypeptide is Glycine--tRNA ligase alpha subunit (Paracoccus denitrificans (strain Pd 1222)).